A 372-amino-acid chain; its full sequence is MAFEDRCSPSQANSPGPVTGRVPAPHAETLAYSPQSQYTCTTIESKYERGSPNMTIVKVQPDSPPPSPGRGQNEMEYQDYYRPETPDVKPHFSREEQRFELDRSRGQRLQPTTPVAFSINNILHPEFGLNAIRKTSKIEGPKPIGPNHSILYKPYDLSKPDLSKYGFDYLKSKETSDCNALPPLGGLRETVSQIGERLSRDREPPKSLEQQKRPDSASSIVSSTSSGAVSTCGSSDASSIQSQSNPGQLWPAWVYCTRYSDRPSSGPRSRRVKKKAAPEEKRPRTAFSGAQLARLKHEFAENRYLTERRRQSLAAELGLAEAQIKIWFQNKRAKIKKASGQRNPLALQLMAQGLYNHSTVTESDDEEEINVT.

Disordered stretches follow at residues 1–35 (MAFE…YSPQ), 47–112 (YERG…LQPT), 196–246 (ERLS…QSNP), and 261–286 (DRPS…PRTA). Basic and acidic residues-rich tracts occupy residues 79–105 (DYYR…DRSR) and 197–215 (RLSR…KRPD). Positions 216-244 (SASSIVSSTSSGAVSTCGSSDASSIQSQS) are enriched in low complexity. Residues 280–339 (EKRPRTAFSGAQLARLKHEFAENRYLTERRRQSLAAELGLAEAQIKIWFQNKRAKIKKAS) constitute a DNA-binding region (homeobox).

The protein belongs to the engrailed homeobox family. As to expression, expressed in the middle silk gland but not in the posterior silk gland during the fourth molt/fifth intermolt period.

The protein resides in the nucleus. In terms of biological role, this protein might be involved in the compartmentalization of the silk gland. The chain is Segmentation polarity homeobox protein engrailed (en) from Bombyx mori (Silk moth).